Here is a 714-residue protein sequence, read N- to C-terminus: Transcription activator of gluconeogenesis UREG_00958 (714 aa).

The disordered stretch occupies residues 1-71; that stretch reads MTSNARNGPL…NAKDPLRPRR (71 aa). Positions 38 to 62 are enriched in polar residues; it reads ESQTQVENSSTKQPNGQTKPMSASN. The segment at residues 78 to 106 is a DNA-binding region (zn(2)-C6 fungal-type); the sequence is CFACQRAHLTCGDERPCQRCIKRGIQNSC. Disordered regions lie at residues 176-228, 274-312, and 539-567; these read SLSQ…NASG, GAGD…TAQP, and NTGG…VNPS. Over residues 191–228 the composition is skewed to polar residues; that stretch reads FPSQSPVSPTFSITANSATSGNQNMPSSLPASNGNASG. Positions 545–555 are enriched in low complexity; that stretch reads GSTSGTSSRGS.

The protein belongs to the ERT1/acuK family.

It localises to the nucleus. Transcription factor which regulates nonfermentable carbon utilization. Activator of gluconeogenetic genes. The sequence is that of Transcription activator of gluconeogenesis UREG_00958 from Uncinocarpus reesii (strain UAMH 1704).